A 344-amino-acid chain; its full sequence is Molybdate/tungstate import ATP-binding protein WtpC (344 aa).

Residues 2–231 (LRVESVSKDY…PVDEGVARFL (230 aa)) enclose the ABC transporter domain. 33-40 (GPSGAGKT) serves as a coordination point for ATP. Residues 280–344 (KTSARNEFRA…SFKTSAIKVF (65 aa)) enclose the Mop domain.

The protein belongs to the ABC transporter superfamily. Sulfate/tungstate importer (TC 3.A.1.6) family. In terms of assembly, the complex is composed of two ATP-binding proteins (WtpC), two transmembrane proteins (WtpB) and a solute-binding protein (WtpA).

The protein localises to the cell membrane. It catalyses the reaction tungstate(in) + ATP + H2O = tungstate(out) + ADP + phosphate + H(+). Its function is as follows. Part of the ABC transporter complex WtpABC involved in molybdate/tungstate import. Responsible for energy coupling to the transport system. The protein is Molybdate/tungstate import ATP-binding protein WtpC (wtpC) of Pyrococcus abyssi (strain GE5 / Orsay).